Consider the following 414-residue polypeptide: MNAEIIAVGSELLLGQIANTNAQFLSQQLAMLGINVYFHTVVGDNAGRLEQAVKTAQTRANLIIFTGGLGPTKDDLTKETIARLLGRRLVIDEEALRAIEVYFARTNRPMTENNKKQALVLEGSTVLKNEHGMAPGMALVADGITYMLLPGPPKEMRPMFKKYGNAFLRRTFSLSERIESRVLRFFGIGESALETAIADLIDAQSNPTIAPLAGDGEVTLRLTAKHQDEAEAKRLLDEVESAILARVGRHCYGYNDETLFTKTLERLKERGWTIASAESLTGGLFLEQLTALPGASQVVQGGVVCYTNGVKEQVLGIPRPLLEAEGAVSEPCARLLAENVRAMCDADIGISFTGVAGPDPLEGHPPGTVYIGIAVRGRDATVHRLMLSGTRDAIRIRTAKYGCFFLLEMLAADC.

Belongs to the CinA family.

The sequence is that of Putative competence-damage inducible protein from Geobacillus kaustophilus (strain HTA426).